We begin with the raw amino-acid sequence, 425 residues long: UDP-N-acetylglucosamine 1-carboxyvinyltransferase (425 aa).

25-26 (KN) is a phosphoenolpyruvate binding site. Arg-95 is a binding site for UDP-N-acetyl-alpha-D-glucosamine. Residue Cys-119 is the Proton donor of the active site. The residue at position 119 (Cys-119) is a 2-(S-cysteinyl)pyruvic acid O-phosphothioketal. UDP-N-acetyl-alpha-D-glucosamine contacts are provided by residues 124–128 (RPVDQ), Asp-306, and Ile-328.

Belongs to the EPSP synthase family. MurA subfamily.

Its subcellular location is the cytoplasm. It carries out the reaction phosphoenolpyruvate + UDP-N-acetyl-alpha-D-glucosamine = UDP-N-acetyl-3-O-(1-carboxyvinyl)-alpha-D-glucosamine + phosphate. It participates in cell wall biogenesis; peptidoglycan biosynthesis. Cell wall formation. Adds enolpyruvyl to UDP-N-acetylglucosamine. The chain is UDP-N-acetylglucosamine 1-carboxyvinyltransferase from Thermus thermophilus (strain ATCC BAA-163 / DSM 7039 / HB27).